Here is a 329-residue protein sequence, read N- to C-terminus: Probable ABC transporter permease protein MG188 homolog (329 aa).

The next 6 helical transmembrane spans lie at 30–50 (FLLFCPALLTTFLFTLVPFFL), 96–116 (IISLPLTIVLAIIISSAIVFV), 128–148 (VFFLPYVTSGVAVSIAFIYIL), 176–196 (ALWGILIFGIWKNMAFNVLVI), 234–254 (LIFLLTLLILGGMQVFPISLF), and 283–303 (NFAGAATLVLFILGVCYGLVL). The ABC transmembrane type-1 domain occupies 88 to 303 (LRNSFLYSII…ILGVCYGLVL (216 aa)).

This sequence belongs to the binding-protein-dependent transport system permease family. MalFG subfamily.

The protein resides in the cell membrane. Functionally, probably part of a binding-protein-dependent transport system. Probably responsible for the translocation of the substrate across the membrane. The sequence is that of Probable ABC transporter permease protein MG188 homolog from Mycoplasma pneumoniae (strain ATCC 29342 / M129 / Subtype 1) (Mycoplasmoides pneumoniae).